The chain runs to 238 residues: Ribonuclease PH (238 aa).

Phosphate is bound by residues arginine 86 and 124–126 (GTR).

Belongs to the RNase PH family. In terms of assembly, homohexameric ring arranged as a trimer of dimers.

The catalysed reaction is tRNA(n+1) + phosphate = tRNA(n) + a ribonucleoside 5'-diphosphate. Its function is as follows. Phosphorolytic 3'-5' exoribonuclease that plays an important role in tRNA 3'-end maturation. Removes nucleotide residues following the 3'-CCA terminus of tRNAs; can also add nucleotides to the ends of RNA molecules by using nucleoside diphosphates as substrates, but this may not be physiologically important. Probably plays a role in initiation of 16S rRNA degradation (leading to ribosome degradation) during starvation. This chain is Ribonuclease PH, found in Alkalilimnicola ehrlichii (strain ATCC BAA-1101 / DSM 17681 / MLHE-1).